Here is a 292-residue protein sequence, read N- to C-terminus: 2-(5''-triphosphoribosyl)-3'-dephosphocoenzyme-A synthase (292 aa).

Belongs to the CitG/MdcB family.

The catalysed reaction is 3'-dephospho-CoA + ATP = 2'-(5''-triphospho-alpha-D-ribosyl)-3'-dephospho-CoA + adenine. Catalyzes the formation of 2-(5''-triphosphoribosyl)-3'-dephosphocoenzyme-A, the precursor of the prosthetic group of the holo-acyl carrier protein (gamma chain) of citrate lyase, from ATP and dephospho-CoA. This chain is 2-(5''-triphosphoribosyl)-3'-dephosphocoenzyme-A synthase, found in Escherichia coli (strain SMS-3-5 / SECEC).